The primary structure comprises 165 residues: Large ribosomal subunit protein uL10 (165 aa).

It belongs to the universal ribosomal protein uL10 family. Part of the ribosomal stalk of the 50S ribosomal subunit. The N-terminus interacts with L11 and the large rRNA to form the base of the stalk. The C-terminus forms an elongated spine to which L12 dimers bind in a sequential fashion forming a multimeric L10(L12)X complex.

Forms part of the ribosomal stalk, playing a central role in the interaction of the ribosome with GTP-bound translation factors. The chain is Large ribosomal subunit protein uL10 from Shewanella piezotolerans (strain WP3 / JCM 13877).